The chain runs to 310 residues: Aspartate carbamoyltransferase catalytic subunit 2 (310 aa).

Carbamoyl phosphate contacts are provided by Arg55 and Thr56. Lys85 is an L-aspartate binding site. Positions 106, 134, and 137 each coordinate carbamoyl phosphate. Arg167 and Arg228 together coordinate L-aspartate. The carbamoyl phosphate site is built by Leu266 and Pro267.

This sequence belongs to the aspartate/ornithine carbamoyltransferase superfamily. ATCase family. As to quaternary structure, heterododecamer (2C3:3R2) of six catalytic PyrB chains organized as two trimers (C3), and six regulatory PyrI chains organized as three dimers (R2).

It carries out the reaction carbamoyl phosphate + L-aspartate = N-carbamoyl-L-aspartate + phosphate + H(+). The protein operates within pyrimidine metabolism; UMP biosynthesis via de novo pathway; (S)-dihydroorotate from bicarbonate: step 2/3. In terms of biological role, catalyzes the condensation of carbamoyl phosphate and aspartate to form carbamoyl aspartate and inorganic phosphate, the committed step in the de novo pyrimidine nucleotide biosynthesis pathway. This chain is Aspartate carbamoyltransferase catalytic subunit 2, found in Shewanella halifaxensis (strain HAW-EB4).